A 376-amino-acid chain; its full sequence is Zinc-regulated transporter 1 (376 aa).

The Extracellular segment spans residues 1-50 (MSNVTTPWWKQWDPSEVTLADKTPDDVWKTCVLQGVYFGGNEYNGNLGAR). A helical membrane pass occupies residues 51-71 (ISSVFVILFVSTFFTMFPLIS). The Cytoplasmic segment spans residues 72 to 80 (TKVKRLRIP). Residues 81–101 (LYVYLFAKYFGSGVIVATAFI) traverse the membrane as a helical segment. The Extracellular segment spans residues 102–122 (HLMDPAYGAIGGTTCVGQTGN). Residues 123–143 (WGLYSWCPAIMLTSLTFTFLT) form a helical membrane-spanning segment. The Cytoplasmic segment spans residues 144 to 216 (DLFSSVWVER…TSMDVVQSFQ (73 aa)). Residues 177–191 (VSSENDNENGTANGS) are compositionally biased toward polar residues. The segment at 177 to 196 (VSSENDNENGTANGSHDTKN) is disordered. The helical transmembrane segment at 217 to 237 (AQFYAFLILEFGVIFHSVMIG) threads the bilayer. At 238–242 (LNLGS) the chain is on the extracellular side. A helical membrane pass occupies residues 243 to 263 (VGDEFSSLYPVLVFHQSFEGL). Over 264-278 (GIGARLSAIEFPRSK) the chain is Cytoplasmic. A helical membrane pass occupies residues 279–299 (RWWPWALCVAYGLTTPICVAI). The Extracellular portion of the chain corresponds to 300–310 (GLGVRTRYVSG). Residues 311 to 331 (SYTALVISGVLDAISAGILLY) traverse the membrane as a helical segment. The Cytoplasmic portion of the chain corresponds to 332–354 (TGLVELLARDFIFNPQRTKDLRE). Residues 355-375 (LSFNVICTLFGAGIMALIGKW) form a helical membrane-spanning segment. Ala376 is a topological domain (extracellular).

Belongs to the ZIP transporter (TC 2.A.5) family.

It localises to the membrane. In terms of biological role, high-affinity zinc transport protein. This Saccharomyces cerevisiae (strain ATCC 204508 / S288c) (Baker's yeast) protein is Zinc-regulated transporter 1 (ZRT1).